A 432-amino-acid chain; its full sequence is Enolase (432 aa).

Q167 is a binding site for (2R)-2-phosphoglycerate. E209 acts as the Proton donor in catalysis. Mg(2+) is bound by residues D246, E291, and D318. Positions 343, 372, 373, and 394 each coordinate (2R)-2-phosphoglycerate. K343 functions as the Proton acceptor in the catalytic mechanism.

The protein belongs to the enolase family. In terms of assembly, component of the RNA degradosome, a multiprotein complex involved in RNA processing and mRNA degradation. It depends on Mg(2+) as a cofactor.

Its subcellular location is the cytoplasm. It localises to the secreted. The protein resides in the cell surface. The enzyme catalyses (2R)-2-phosphoglycerate = phosphoenolpyruvate + H2O. It functions in the pathway carbohydrate degradation; glycolysis; pyruvate from D-glyceraldehyde 3-phosphate: step 4/5. Functionally, catalyzes the reversible conversion of 2-phosphoglycerate (2-PG) into phosphoenolpyruvate (PEP). It is essential for the degradation of carbohydrates via glycolysis. The sequence is that of Enolase from Colwellia psychrerythraea (strain 34H / ATCC BAA-681) (Vibrio psychroerythus).